The following is a 215-amino-acid chain: Ras-related protein Rab-5A (215 aa).

GTP contacts are provided by Ser-29, Ala-30, Gly-32, Lys-33, Ser-34, Ser-35, His-46, Glu-47, Thr-52, and Gly-78. A Mg(2+)-binding site is contributed by Ser-34. 2 consecutive short sequence motifs (switch) follow at residues 44–56 and 77–93; these read QFHE…IGAA and AGQE…YRGA. Position 52 (Thr-52) interacts with Mg(2+). Ser-84 carries the phosphoserine; by LRRK2 modification. Arg-120 carries a (Microbial infection) N-beta-linked (GlcNAc) arginine glycan. Residues Asn-133, Lys-134, Asp-136, Ala-164, and Lys-165 each contribute to the GTP site. The tract at residues 181–215 is disordered; sequence LPKNEPQNPGANSARGRGVDLTEPTQPTRNQCCSN. The segment covering 203-215 has biased composition (polar residues); sequence EPTQPTRNQCCSN. 2 S-geranylgeranyl cysteine lipidation sites follow: Cys-212 and Cys-213.

Belongs to the small GTPase superfamily. Rab family. In terms of assembly, interacts with SGSM1 and SGSM3. Interacts with PIK3CB. Interacts with GDI1; this promotes dissociation from membranes; phosphorylation at Ser-84 disrupts this interaction. Interacts with GDI2; phosphorylation at Ser-84 disrupts the interaction. Interacts with EEA1. Interacts with RIN1 and GAPVD1, which regulate its pathway, probably by acting as a GEF. Interacts with RINL. Interacts with ALS2CL, SUN2, ZFYVE20 and RUFY1. Interacts with RABEP1; one RABEP1 homodimer binds two RAB5A chains, but at opposite sides of the dimer. Interacts with OCRL. Interacts with INPP5F. May be a component of a complex composed of RAB5A, DYN2 and PIK3C3. Does not interact with BLOC-3 complex (heterodimer of HPS1 and HPS4). Interacts with CLN5. Interacts with APPL2. Interacts with F8A1/F8A2/F8A3. Found in a complex with F8A1/F8A2/F8A3, HTT and RAB5A; mediates the recruitment of HTT by RAB5A onto early endosomes. Interacts with ATP9A. Interacts with PPP1R21; mediates the recruitment of FERRY complex by RAB5A onto early endosomes. The cofactor is Mg(2+). In terms of processing, phosphorylation of Ser-84 in the switch II region by LRRK2 prevents the association of RAB regulatory proteins, including RAB GDP dissociation inhibitors GDI1 and GDI2. (Microbial infection) Glycosylated on arginine residues by S.typhimurium protein Ssek3.

It is found in the cell membrane. The protein localises to the early endosome membrane. The protein resides in the melanosome. Its subcellular location is the cytoplasmic vesicle. It localises to the cell projection. It is found in the ruffle. The protein localises to the membrane. The protein resides in the cytoplasm. Its subcellular location is the cytosol. It localises to the phagosome membrane. It is found in the endosome membrane. The catalysed reaction is GTP + H2O = GDP + phosphate + H(+). Regulated by guanine nucleotide exchange factors (GEFs) including RINL, which promote the exchange of bound GDP for free GTP. Regulated by GTPase activating proteins (GAPs) which increase the GTP hydrolysis activity. Inhibited by GDP dissociation inhibitors (GDIs). The small GTPases Rab are key regulators of intracellular membrane trafficking, from the formation of transport vesicles to their fusion with membranes. Rabs cycle between an inactive GDP-bound form and an active GTP-bound form that is able to recruit to membranes different sets of downstream effectors directly responsible for vesicle formation, movement, tethering and fusion. RAB5A is required for the fusion of plasma membranes and early endosomes. Contributes to the regulation of filopodia extension. Required for the exosomal release of SDCBP, CD63, PDCD6IP and syndecan. Regulates maturation of apoptotic cell-containing phagosomes, probably downstream of DYN2 and PIK3C3. The sequence is that of Ras-related protein Rab-5A from Homo sapiens (Human).